Here is a 243-residue protein sequence, read N- to C-terminus: Pyridoxine 5'-phosphate synthase (243 aa).

Asn9 is a binding site for 3-amino-2-oxopropyl phosphate. 11–12 serves as a coordination point for 1-deoxy-D-xylulose 5-phosphate; sequence DH. Arg20 lines the 3-amino-2-oxopropyl phosphate pocket. The active-site Proton acceptor is the His45. Residues Arg47 and His52 each contribute to the 1-deoxy-D-xylulose 5-phosphate site. Residue Glu72 is the Proton acceptor of the active site. Thr102 is a binding site for 1-deoxy-D-xylulose 5-phosphate. His193 serves as the catalytic Proton donor. 3-amino-2-oxopropyl phosphate contacts are provided by residues Gly194 and 215-216; that span reads GH.

It belongs to the PNP synthase family. In terms of assembly, homooctamer; tetramer of dimers.

The protein localises to the cytoplasm. The enzyme catalyses 3-amino-2-oxopropyl phosphate + 1-deoxy-D-xylulose 5-phosphate = pyridoxine 5'-phosphate + phosphate + 2 H2O + H(+). It functions in the pathway cofactor biosynthesis; pyridoxine 5'-phosphate biosynthesis; pyridoxine 5'-phosphate from D-erythrose 4-phosphate: step 5/5. Functionally, catalyzes the complicated ring closure reaction between the two acyclic compounds 1-deoxy-D-xylulose-5-phosphate (DXP) and 3-amino-2-oxopropyl phosphate (1-amino-acetone-3-phosphate or AAP) to form pyridoxine 5'-phosphate (PNP) and inorganic phosphate. The protein is Pyridoxine 5'-phosphate synthase of Salmonella typhimurium (strain LT2 / SGSC1412 / ATCC 700720).